The sequence spans 61 residues: Large ribosomal subunit protein uL30 (61 aa).

This sequence belongs to the universal ribosomal protein uL30 family. In terms of assembly, part of the 50S ribosomal subunit.

The chain is Large ribosomal subunit protein uL30 from Treponema pallidum subsp. pallidum (strain SS14).